The primary structure comprises 619 residues: Auxin efflux carrier component 7 (619 aa).

The Extracellular segment spans residues 1 to 7 (MITWHDL). A helical membrane pass occupies residues 8-28 (YTVLTAVIPLYVAMILAYGSV). Residues 29 to 38 (RWWKIFSPDQ) are Cytoplasmic-facing. The chain crosses the membrane as a helical span at residues 39-59 (CSGINRFVAIFAVPLLSFHFI). V51 lines the (indol-3-yl)acetate pocket. Topologically, residues 60-71 (SSNNPYAMNLRF) are extracellular. The helical transmembrane segment at 72-92 (IAADTLQKLIMLTLLIIWANF) threads the bilayer. Over 93–101 (TRSGSLEWS) the chain is Cytoplasmic. The chain crosses the membrane as a helical span at residues 102–122 (ITIFSLSTLPNTLVMGIPLLI). N112 and L114 together coordinate (indol-3-yl)acetate. At 123–131 (AMYGEYSGS) the chain is on the extracellular side. Residues 132–152 (LMVQIVVLQCIIWYTLLLFLF) form a helical membrane-spanning segment. Y145 contacts (indol-3-yl)acetate. The Cytoplasmic portion of the chain corresponds to 153–479 (EYRGAKILIM…LIRNPNTYSS (327 aa)). Residues S229, S246, and S286 each carry the phosphoserine modification. The interval 306 to 340 (GAPGSYPAPNPEFSTGNKTGSKAPKENHHHVGKSN) is disordered. A Phosphothreonine modification is found at T320. Residue S357 is modified to Phosphoserine. Residues 393-413 (HTQNGENKAGPMNGDYGGEEE) are disordered. A helical transmembrane segment spans residues 480–500 (LIGLIWALVAFRWDVAMPKII). Residues 501–503 (QQS) lie on the Extracellular side of the membrane. The helical transmembrane segment at 504–524 (ISILSDAGLGMAMFSLGLFMA) threads the bilayer. Residues 525–538 (LQPKLIACGNSTAT) lie on the Cytoplasmic side of the membrane. Residues 539-559 (FAMAVRFFTGPAVMAVAAMAI) traverse the membrane as a helical segment. Residues 560–564 (GLRGD) are Extracellular-facing. A helical membrane pass occupies residues 565–585 (LLRVAIVQAALPQGIVPFVFA). (indol-3-yl)acetate is bound by residues I579 and V580. Topologically, residues 586–598 (KEYNVHPAILSTG) are cytoplasmic. A helical transmembrane segment spans residues 599 to 619 (VIFGMLIALPITLVYYILLGL).

The protein belongs to the auxin efflux carrier (TC 2.A.69.1) family. In terms of assembly, homodimer.

It is found in the cell membrane. Acts as a component of the auxin efflux carrier. Mediates the initial auxin gradient which contributes to the establishment of the apical-basal axis in early embryogenesis. Together with PIN3 and PIN4, involved in the connective auxin transport (CAT) that ensures communication across the shoot system, and modulates strigolactone-mediated shoot branching control. The abcb19 pin3 pin4 pin7 quadruple mutant exhibits an additive phenotype on strigolactone-mediated bud outgrowth responses and shoot branching control. In Arabidopsis thaliana (Mouse-ear cress), this protein is Auxin efflux carrier component 7.